We begin with the raw amino-acid sequence, 233 residues long: MSVISMKQLLEAGVHFGHQTRRWNPKMAPYIFTERNGIYIIDLQKTVKKAEEAYNFVKQVAEEGKDILFVGTKKQAQEAIQEEAIRSNMHFVNNRWLGGMLTNFSTIRGRIRKLEQIEKMQEDGTFDVLPKKEVIKLKGEMEKLEKNLGGIRNLDASNVGAMFIVDPRKEKNAILEAKILGIPVVAIVDTNCDPEEVDYVIPGNDDAIRAVKLITAKMADAIMEGRQGEQLAE.

Belongs to the universal ribosomal protein uS2 family.

In Clostridium beijerinckii (strain ATCC 51743 / NCIMB 8052) (Clostridium acetobutylicum), this protein is Small ribosomal subunit protein uS2.